The following is a 362-amino-acid chain: 3-dehydroquinate synthase (362 aa).

NAD(+)-binding positions include 72–77 (DGEAHK), 106–110 (GVIGD), 130–131 (TT), Lys-143, and Lys-152. Glu-185, His-248, and His-265 together coordinate Zn(2+).

It belongs to the sugar phosphate cyclases superfamily. Dehydroquinate synthase family. Co(2+) is required as a cofactor. Requires Zn(2+) as cofactor. It depends on NAD(+) as a cofactor.

The protein localises to the cytoplasm. The enzyme catalyses 7-phospho-2-dehydro-3-deoxy-D-arabino-heptonate = 3-dehydroquinate + phosphate. Its pathway is metabolic intermediate biosynthesis; chorismate biosynthesis; chorismate from D-erythrose 4-phosphate and phosphoenolpyruvate: step 2/7. Functionally, catalyzes the conversion of 3-deoxy-D-arabino-heptulosonate 7-phosphate (DAHP) to dehydroquinate (DHQ). The chain is 3-dehydroquinate synthase from Laribacter hongkongensis (strain HLHK9).